The primary structure comprises 178 residues: Large ribosomal subunit protein uL5 (178 aa).

It belongs to the universal ribosomal protein uL5 family. Part of the 50S ribosomal subunit; part of the 5S rRNA/L5/L18/L25 subcomplex. Contacts the 5S rRNA and the P site tRNA. Forms a bridge to the 30S subunit in the 70S ribosome.

Functionally, this is one of the proteins that bind and probably mediate the attachment of the 5S RNA into the large ribosomal subunit, where it forms part of the central protuberance. In the 70S ribosome it contacts protein S13 of the 30S subunit (bridge B1b), connecting the 2 subunits; this bridge is implicated in subunit movement. Contacts the P site tRNA; the 5S rRNA and some of its associated proteins might help stabilize positioning of ribosome-bound tRNAs. The protein is Large ribosomal subunit protein uL5 of Aliivibrio fischeri (strain ATCC 700601 / ES114) (Vibrio fischeri).